A 194-amino-acid chain; its full sequence is MPKLILASTSPWRRALLEKLQISFECAAPEVDETPRSDESPRQLVLRLAQEKAQSLASRYPDHLIIGSDQVCVLDGEITGKPLTEENARLQLRKASGNIVTFYTGLALFNSANGHLQTEVEPFDVHFRHLSEAEIDNYVRKEHPLHCAGSFKSEGFGITLFERLEGRDPNTLVGLPLIALCQMLRREGKNPLMG.

D69 functions as the Proton acceptor in the catalytic mechanism.

Belongs to the Maf family. YceF subfamily. A divalent metal cation serves as cofactor.

It is found in the cytoplasm. The catalysed reaction is N(7)-methyl-GTP + H2O = N(7)-methyl-GMP + diphosphate + H(+). Its function is as follows. Nucleoside triphosphate pyrophosphatase that hydrolyzes 7-methyl-GTP (m(7)GTP). May have a dual role in cell division arrest and in preventing the incorporation of modified nucleotides into cellular nucleic acids. The polypeptide is 7-methyl-GTP pyrophosphatase (yceF) (Shigella flexneri).